Consider the following 215-residue polypeptide: MKTVLLTGFDPFGGESINPAWEVAKSLHEKTIGEYKIISKQVPTVFHKSIRVLKEYIEELSPEMIICIGQAGGRPDITIERVAINIDDARIADNEGNKPVDMPVVEEGPIAYWSTLPMKAIVKKLREEGIPSSVSQTAGTFVCNHLFYGLMHELEKHDKKIKGGFVHIPFLPEQASNYPGQPSMSLSTIRKGIELAIEVATEVEVDIVACGGATH.

Residues Glu-80, Cys-143, and His-167 contribute to the active site.

This sequence belongs to the peptidase C15 family. Homotetramer.

The protein resides in the cytoplasm. The catalysed reaction is Release of an N-terminal pyroglutamyl group from a polypeptide, the second amino acid generally not being Pro.. In terms of biological role, removes 5-oxoproline from various penultimate amino acid residues except L-proline. In Bacillus mycoides (strain KBAB4) (Bacillus weihenstephanensis), this protein is Pyrrolidone-carboxylate peptidase.